The chain runs to 321 residues: Cytochrome c biogenesis protein CcsA (321 aa).

6 helical membrane passes run 17-37 (IISI…IVGI), 43-63 (KGII…WIYS), 143-163 (MLLS…FLVI), 225-245 (VISL…VWAN), 258-275 (ETWA…LHTR), and 287-307 (IVAS…NLLG).

The protein belongs to the CcmF/CycK/Ccl1/NrfE/CcsA family. May interact with Ccs1.

The protein localises to the plastid. It is found in the chloroplast thylakoid membrane. Functionally, required during biogenesis of c-type cytochromes (cytochrome c6 and cytochrome f) at the step of heme attachment. This is Cytochrome c biogenesis protein CcsA from Drimys granadensis.